A 175-amino-acid polypeptide reads, in one-letter code: Putative lipoprotein LppN (175 aa).

Positions 1 to 20 are cleaved as a signal peptide; the sequence is MRLPGRHVLYALSAVTMLAA. Cys21 is lipidated: N-palmitoyl cysteine. Residue Cys21 is the site of S-diacylglycerol cysteine attachment. Residues 31 to 56 are disordered; that stretch reads ASTNMNPTNPPATAETATVSPTPAPQ. Residues 33 to 48 show a composition bias toward low complexity; the sequence is TNMNPTNPPATAETAT. Prevents bacterial uptake by a human macrophage-like cell line stretches follow at residues 61 to 80, 101 to 120, and 121 to 140; these read ETWI…PADL, RAPV…DCAA, and GFAP…VAYL.

The protein localises to the cell membrane. It localises to the cell surface. In terms of biological role, probably involved in bacterial recognition and uptake by its host (human). The sequence is that of Putative lipoprotein LppN (lppN) from Mycobacterium tuberculosis (strain ATCC 25618 / H37Rv).